Reading from the N-terminus, the 712-residue chain is Ribosomal RNA large subunit methyltransferase K/L (712 aa).

The 112-residue stretch at 46–157 (GAYQALLHSR…RENMVVSLDL (112 aa)) folds into the THUMP domain.

This sequence belongs to the methyltransferase superfamily. RlmKL family.

The protein localises to the cytoplasm. The enzyme catalyses guanosine(2445) in 23S rRNA + S-adenosyl-L-methionine = N(2)-methylguanosine(2445) in 23S rRNA + S-adenosyl-L-homocysteine + H(+). It catalyses the reaction guanosine(2069) in 23S rRNA + S-adenosyl-L-methionine = N(2)-methylguanosine(2069) in 23S rRNA + S-adenosyl-L-homocysteine + H(+). Its function is as follows. Specifically methylates the guanine in position 2445 (m2G2445) and the guanine in position 2069 (m7G2069) of 23S rRNA. This Actinobacillus pleuropneumoniae serotype 5b (strain L20) protein is Ribosomal RNA large subunit methyltransferase K/L.